Reading from the N-terminus, the 807-residue chain is Anaphase-promoting complex subunit 4 (807 aa).

Position 469 is a phosphotyrosine (Tyr469). Positions 755 to 788 are disordered; that stretch reads DESSDDEEEAGGKPVKIKEEVLSESETEAHQDAA. 2 positions are modified to phosphoserine: Ser757 and Ser758. Residues 770–785 show a composition bias toward basic and acidic residues; it reads KIKEEVLSESETEAHQ. A Glycyl lysine isopeptide (Lys-Gly) (interchain with G-Cter in SUMO2) cross-link involves residue Lys772. Ser777 and Ser779 each carry phosphoserine. Residue Lys797 forms a Glycyl lysine isopeptide (Lys-Gly) (interchain with G-Cter in SUMO2) linkage.

This sequence belongs to the APC4 family. The mammalian APC/C is composed at least of 14 distinct subunits ANAPC1, ANAPC2, CDC27/APC3, ANAPC4, ANAPC5, CDC16/APC6, ANAPC7, CDC23/APC8, ANAPC10, ANAPC11, CDC26/APC12, ANAPC13, ANAPC15 and ANAPC16 that assemble into a complex of at least 19 chains with a combined molecular mass of around 1.2 MDa; APC/C interacts with FZR1 and FBXO5. In the context of the APC/C complex, directly interacts with UBE2S. Interacts with FBXO43.

The protein localises to the nucleus. It functions in the pathway protein modification; protein ubiquitination. Functionally, component of the anaphase promoting complex/cyclosome (APC/C), a cell cycle-regulated E3 ubiquitin ligase that controls progression through mitosis and the G1 phase of the cell cycle. The APC/C complex acts by mediating ubiquitination and subsequent degradation of target proteins: it mainly mediates the formation of 'Lys-11'-linked polyubiquitin chains and, to a lower extent, the formation of 'Lys-48'- and 'Lys-63'-linked polyubiquitin chains. The APC/C complex catalyzes assembly of branched 'Lys-11'-/'Lys-48'-linked branched ubiquitin chains on target proteins. This Mus musculus (Mouse) protein is Anaphase-promoting complex subunit 4 (Anapc4).